The primary structure comprises 4678 residues: E3 ubiquitin-protein ligase MYCBP2 (4678 aa).

Disordered stretches follow at residues D87–S127, S172–P192, and A609–K628. A compositionally biased stretch (basic residues) spans S100–R124. S127, S178, S181, and S183 each carry phosphoserine. RCC1 repeat units lie at residues D600–K655, N699–P755, K907–E957, N958–M1008, and G1010–D1066. Over residues R898 to K910 the composition is skewed to basic residues. The tract at residues R898 to T928 is disordered. A compositionally biased stretch (basic and acidic residues) spans H911 to S924. The interval N1235–L1386 is PHR domain 1. At S1624 the chain carries Phosphoserine. The interval N1726–R1884 is PHR domain 2. C1748 and C1863 are oxidised to a cystine. Disordered regions lie at residues F1993–S2012 and Q2321–A2340. Over residues N1994–S2012 the composition is skewed to polar residues. The RAE1 binding stretch occupies residues V2022–V2550. The stretch at S2341–K2443 is one Filamin repeat. Residue T2683 is modified to Phosphothreonine. 4 disordered regions span residues L2709–E2931, T2943–G2963, E2979–K3020, and A3066–L3085. Residues N2718–E2733 show a composition bias toward polar residues. The segment covering L2742 to G2760 has biased composition (basic and acidic residues). S2769 is modified (phosphoserine). The segment covering D2775–S2785 has biased composition (basic and acidic residues). The segment covering R2786 to A2810 has biased composition (polar residues). Phosphoserine occurs at positions 2787, 2789, 2833, 2839, 2869, 2871, and 2920. Residues P2828 to S2843 show a composition bias toward low complexity. The span at T2860–S2871 shows a compositional bias: basic and acidic residues. Phosphoserine is present on S2985. Residues I2988–K3001 are compositionally biased toward basic residues. Phosphoserine is present on residues S3090, S3478, and S3505. The tract at residues P3605–V3631 is disordered. A compositionally biased stretch (basic and acidic residues) spans N3616–V3631. The region spanning S3719 to E3897 is the DOC domain. Positions S3915 to E3934 are disordered. Position 3921 is a phosphothreonine (T3921). Phosphoserine occurs at positions 3931 and 3932. Positions 4428, 4431, 4446, 4448, 4451, 4454, 4475, 4478, 4544, and 4547 each coordinate Zn(2+). The RING-type; atypical zinc-finger motif lies at C4428 to K4479. Residues Y4539–H4676 form a tandem cysteine domain region. The active site involves C4558. Zn(2+)-binding residues include C4575, C4578, C4587, H4590, C4599, C4602, and C4603. The active site involves C4610. Zn(2+)-binding residues include C4617, C4620, C4638, C4652, H4658, C4669, and C4672.

It belongs to the RING-Cys relay (RCR) family. Interacts with MYC. Interacts with TSC2 (tuberin) when TSC2 is in complex with TSC1 (hamartin). Interacts with FBXO45. Interacts with RAE1. Interacts with CPNE1 (via VWFA domain) and CPNE4 (via VWFA domain). Interacts with (sumoylated) RANGAP1; interaction with sumoylated RANGAP1 inhibits E3 ubiquitin-protein ligase activity and promotes MYCBP2 translocation to the nucleus. Interacts with RAN. Interacts with ATP13A2; the interaction inhibits the ubiquitination of TSC2 by MYCBP2. Interacts with USP11. Autoubiquitinated. In terms of tissue distribution, expressed in all tissues examined, expression is exceptionally abundant in brain and thymus. Colocalizes with TSC1 and TSC2 along the neurites and in the growth cones. Highly expressed in peripheral and central neurons. Colocalized with TSC1 in one of the filopodial extensions at the tip of a growth cone.

The protein localises to the nucleus. It localises to the cell projection. The protein resides in the axon. Its subcellular location is the cytoplasm. It is found in the cytoskeleton. The enzyme catalyses [E2 ubiquitin-conjugating enzyme]-S-ubiquitinyl-L-cysteine + [acceptor protein]-L-threonine = [E2 ubiquitin-conjugating enzyme]-L-cysteine + [acceptor protein]-3-O-ubiquitinyl-L-threonine.. Its pathway is protein modification; protein ubiquitination. In terms of biological role, atypical E3 ubiquitin-protein ligase which specifically mediates ubiquitination of threonine and serine residues on target proteins, instead of ubiquitinating lysine residues. Shows esterification activity towards both threonine and serine, with a preference for threonine, and acts via two essential catalytic cysteine residues that relay ubiquitin to its substrate via thioester intermediates. Interacts with the E2 enzymes UBE2D1, UBE2D3, UBE2E1 and UBE2L3. Plays a key role in neural development, probably by mediating ubiquitination of threonine residues on target proteins. Involved in different processes such as regulation of neurite outgrowth, synaptic growth, synaptogenesis and axon degeneration. Required for the formation of major central nervous system axon tracts. Required for proper axon growth by regulating axon navigation and axon branching: acts by regulating the subcellular location and stability of MAP3K12/DLK. Required for proper localization of retinogeniculate projections but not for eye-specific segregation. Regulates axon guidance in the olfactory system. Involved in Wallerian axon degeneration, an evolutionarily conserved process that drives the loss of damaged axons: acts by promoting destabilization of NMNAT2, probably via ubiquitination of NMNAT2. Catalyzes ubiquitination of threonine and/or serine residues on NMNAT2, consequences of threonine and/or serine ubiquitination are however unknown. Regulates the internalization of TRPV1 in peripheral sensory neurons. Mediates ubiquitination and subsequent proteasomal degradation of TSC2/tuberin. Independently of the E3 ubiquitin-protein ligase activity, also acts as a guanosine exchange factor (GEF) for RAN in neurons of dorsal root ganglia. May function as a facilitator or regulator of transcriptional activation by MYC. Acts in concert with HUWE1 to regulate the circadian clock gene expression by promoting the lithium-induced ubiquination and degradation of NR1D1. This is E3 ubiquitin-protein ligase MYCBP2 from Homo sapiens (Human).